The following is a 224-amino-acid chain: ATP-dependent Clp protease proteolytic subunit 1 (224 aa).

S120 serves as the catalytic Nucleophile. H145 is a catalytic residue.

This sequence belongs to the peptidase S14 family. As to quaternary structure, fourteen ClpP subunits assemble into 2 heptameric rings which stack back to back to give a disk-like structure with a central cavity, resembling the structure of eukaryotic proteasomes.

The protein localises to the cytoplasm. The catalysed reaction is Hydrolysis of proteins to small peptides in the presence of ATP and magnesium. alpha-casein is the usual test substrate. In the absence of ATP, only oligopeptides shorter than five residues are hydrolyzed (such as succinyl-Leu-Tyr-|-NHMec, and Leu-Tyr-Leu-|-Tyr-Trp, in which cleavage of the -Tyr-|-Leu- and -Tyr-|-Trp bonds also occurs).. Cleaves peptides in various proteins in a process that requires ATP hydrolysis. Has a chymotrypsin-like activity. Plays a major role in the degradation of misfolded proteins. The protein is ATP-dependent Clp protease proteolytic subunit 1 of Prochlorococcus marinus (strain MIT 9313).